Here is a 325-residue protein sequence, read N- to C-terminus: Ribosomal RNA small subunit methyltransferase H (325 aa).

Residues 32 to 34 (GGH), aspartate 52, phenylalanine 79, aspartate 100, and glutamine 107 each bind S-adenosyl-L-methionine.

Belongs to the methyltransferase superfamily. RsmH family.

The protein localises to the cytoplasm. The enzyme catalyses cytidine(1402) in 16S rRNA + S-adenosyl-L-methionine = N(4)-methylcytidine(1402) in 16S rRNA + S-adenosyl-L-homocysteine + H(+). In terms of biological role, specifically methylates the N4 position of cytidine in position 1402 (C1402) of 16S rRNA. This Oceanobacillus iheyensis (strain DSM 14371 / CIP 107618 / JCM 11309 / KCTC 3954 / HTE831) protein is Ribosomal RNA small subunit methyltransferase H.